The following is a 103-amino-acid chain: Phosphoribosyl-ATP pyrophosphatase (103 aa).

Belongs to the PRA-PH family.

The protein resides in the cytoplasm. It catalyses the reaction 1-(5-phospho-beta-D-ribosyl)-ATP + H2O = 1-(5-phospho-beta-D-ribosyl)-5'-AMP + diphosphate + H(+). It participates in amino-acid biosynthesis; L-histidine biosynthesis; L-histidine from 5-phospho-alpha-D-ribose 1-diphosphate: step 2/9. The chain is Phosphoribosyl-ATP pyrophosphatase from Listeria monocytogenes serotype 4b (strain CLIP80459).